A 209-amino-acid chain; its full sequence is Protein GrpE (209 aa).

Belongs to the GrpE family. As to quaternary structure, homodimer.

Its subcellular location is the cytoplasm. Functionally, participates actively in the response to hyperosmotic and heat shock by preventing the aggregation of stress-denatured proteins, in association with DnaK and GrpE. It is the nucleotide exchange factor for DnaK and may function as a thermosensor. Unfolded proteins bind initially to DnaJ; upon interaction with the DnaJ-bound protein, DnaK hydrolyzes its bound ATP, resulting in the formation of a stable complex. GrpE releases ADP from DnaK; ATP binding to DnaK triggers the release of the substrate protein, thus completing the reaction cycle. Several rounds of ATP-dependent interactions between DnaJ, DnaK and GrpE are required for fully efficient folding. In Colwellia psychrerythraea (strain 34H / ATCC BAA-681) (Vibrio psychroerythus), this protein is Protein GrpE.